The chain runs to 292 residues: MILAAPTGAGKTSLVTELDPTRFEILSFDSRQIYKNMSIGTAAPTKKEQSKIAHHLVEVLSPSEAVDAGLYNRLAEEALQKVLNLDKIPVFTAGTGFYLKAFLFGMFPVPEIDVSVRDRVLSMSKEEKKNLLKELDPNALDKIFPEDDYRLGRALEVNLMGEKWSRLKIDPNTSAICRYDLDIRLGVFLDLDRKELYERINLRAKQMIEKGMADEAWKIQERFGETCPGLKSLGYNFALENKKGNSNLETFLADLSRSHRNYAKRQVTWFRKEPYVQPMGRSEALERIKHMK.

5-12 (APTGAGKT) serves as a coordination point for ATP. 7 to 12 (TGAGKT) is a binding site for substrate. Residues 29–32 (DSRQ) form an interaction with substrate tRNA region.

It belongs to the IPP transferase family. Monomer. Mg(2+) serves as cofactor.

It carries out the reaction adenosine(37) in tRNA + dimethylallyl diphosphate = N(6)-dimethylallyladenosine(37) in tRNA + diphosphate. Catalyzes the transfer of a dimethylallyl group onto the adenine at position 37 in tRNAs that read codons beginning with uridine, leading to the formation of N6-(dimethylallyl)adenosine (i(6)A). This chain is tRNA dimethylallyltransferase, found in Leptospira borgpetersenii serovar Hardjo-bovis (strain JB197).